The sequence spans 445 residues: METIFAQSSSFGKAGVAVFRVSGTKSLEVLKLLTGKSNFKPRFMYYQKLTSPESNDLIDNAMVVYFKAPNSFTGEDVVEIHTHGSKAISIMLTNALLNIPGVRLAEAGEFTKRAFLNNKFDLTAAEGIADLINAETIMQHKQAIRQAGGALEELYNSWRSQLLRIISLLEAYIDFPDEDIPESVLKDVTNTHKTLINTISEYLNDNRKGELLRSGLKLAIIGPPNAGKSSLLNFLMRRDIAIVSNIAGTTRDIIEGHLDIGGYPIILQDTAGIRGESNDVIEQEGIKRAIDSAKKADIKIVMFDAETLDSAVNEDITGLIDENTIVIINKIDLIPENRIFNIENKYRCLKVSIKNNIALPSILKNIEEIAENMAGFTETPYITNERHRHHLKQALVYLKDFNLDNDLVLATEDIRMTMHRIGAITGIIDVEEILGEIFKNFCIGK.

Arg20, Glu79, and Lys119 together coordinate (6S)-5-formyl-5,6,7,8-tetrahydrofolate. The region spanning 215-371 (GLKLAIIGPP…ILKNIEEIAE (157 aa)) is the TrmE-type G domain. Residue Asn225 participates in K(+) binding. GTP-binding positions include 225–230 (NAGKSS), 244–250 (SNIAGTT), and 269–272 (DTAG). Ser229 contacts Mg(2+). Residues Ser244, Ile246, and Thr249 each contribute to the K(+) site. Residue Thr250 coordinates Mg(2+). Lys445 is a binding site for (6S)-5-formyl-5,6,7,8-tetrahydrofolate.

The protein belongs to the TRAFAC class TrmE-Era-EngA-EngB-Septin-like GTPase superfamily. TrmE GTPase family. As to quaternary structure, homodimer. Heterotetramer of two MnmE and two MnmG subunits. K(+) is required as a cofactor.

Its subcellular location is the cytoplasm. In terms of biological role, exhibits a very high intrinsic GTPase hydrolysis rate. Involved in the addition of a carboxymethylaminomethyl (cmnm) group at the wobble position (U34) of certain tRNAs, forming tRNA-cmnm(5)s(2)U34. This chain is tRNA modification GTPase MnmE, found in Rickettsia bellii (strain OSU 85-389).